We begin with the raw amino-acid sequence, 376 residues long: Erythronate-4-phosphate dehydrogenase (376 aa).

Substrate contacts are provided by S45 and T67. D147 is a binding site for NAD(+). Residue R209 is part of the active site. D233 lines the NAD(+) pocket. E238 is an active-site residue. H255 serves as the catalytic Proton donor. G258 contributes to the NAD(+) binding site. Substrate is bound at residue Y259.

Belongs to the D-isomer specific 2-hydroxyacid dehydrogenase family. PdxB subfamily. As to quaternary structure, homodimer.

The protein localises to the cytoplasm. The catalysed reaction is 4-phospho-D-erythronate + NAD(+) = (R)-3-hydroxy-2-oxo-4-phosphooxybutanoate + NADH + H(+). It functions in the pathway cofactor biosynthesis; pyridoxine 5'-phosphate biosynthesis; pyridoxine 5'-phosphate from D-erythrose 4-phosphate: step 2/5. In terms of biological role, catalyzes the oxidation of erythronate-4-phosphate to 3-hydroxy-2-oxo-4-phosphonooxybutanoate. This chain is Erythronate-4-phosphate dehydrogenase, found in Shewanella sp. (strain W3-18-1).